Consider the following 164-residue polypeptide: Phosphopantetheine adenylyltransferase (164 aa).

Serine 9 is a substrate binding site. ATP is bound by residues 9–10 (SF) and histidine 17. Lysine 41, leucine 73, and lysine 87 together coordinate substrate. Residues 88–90 (GLR), glutamate 98, and 122–128 (YSYLSSS) each bind ATP.

It belongs to the bacterial CoaD family. Homohexamer. Mg(2+) is required as a cofactor.

The protein localises to the cytoplasm. It carries out the reaction (R)-4'-phosphopantetheine + ATP + H(+) = 3'-dephospho-CoA + diphosphate. Its pathway is cofactor biosynthesis; coenzyme A biosynthesis; CoA from (R)-pantothenate: step 4/5. Reversibly transfers an adenylyl group from ATP to 4'-phosphopantetheine, yielding dephospho-CoA (dPCoA) and pyrophosphate. In Rhodococcus opacus (strain B4), this protein is Phosphopantetheine adenylyltransferase.